A 170-amino-acid chain; its full sequence is Heat shock protein beta-7 (170 aa).

The interval 1–39 (MSHRTSSTFRAERSFHSSSSSSSSSTSSSASRALPAQDP) is disordered. The required for localization to SC35 splicing speckles stretch occupies residues 1–71 (MSHRTSSTFR…PLAFPARPGG (71 aa)). Residues 16–31 (HSSSSSSSSSTSSSAS) are compositionally biased toward low complexity. Positions 62-170 (PLAFPARPGG…QQTFRTEIKI (109 aa)) constitute a sHSP domain.

This sequence belongs to the small heat shock protein (HSP20) family. Interacts with C-terminal domain of actin-binding protein 280. In terms of tissue distribution, isoform 1 is highly expressed in adult and fetal heart, skeletal muscle, and at a much lower levels in adipose tissue and in aorta. Undetectable in other tissues. Isoform 2 and isoform 3 are poorly detected in heart.

It is found in the cytoplasm. Its subcellular location is the nucleus. It localises to the cajal body. This is Heat shock protein beta-7 (HSPB7) from Homo sapiens (Human).